The sequence spans 554 residues: Potassium-transporting ATPase potassium-binding subunit (554 aa).

12 consecutive transmembrane segments (helical) span residues 3-23 (PVLA…LAHV), 60-80 (PAYL…LYLL), 131-151 (GLAV…VALV), 174-194 (VRVL…CGVI), 252-272 (LFEI…FGIM), 279-299 (GYAI…LMMW), 323-343 (FGIG…TGAV), 352-372 (GLGG…PGGV), 375-395 (GLYG…LMVG), 412-432 (FAAC…AAAM), 481-501 (LGLA…ALAG), and 522-542 (LFAG…YFPA).

The protein belongs to the KdpA family. In terms of assembly, the system is composed of three essential subunits: KdpA, KdpB and KdpC.

Its subcellular location is the cell membrane. In terms of biological role, part of the high-affinity ATP-driven potassium transport (or Kdp) system, which catalyzes the hydrolysis of ATP coupled with the electrogenic transport of potassium into the cytoplasm. This subunit binds the extracellular potassium ions and delivers the ions to the membrane domain of KdpB through an intramembrane tunnel. This Streptomyces coelicolor (strain ATCC BAA-471 / A3(2) / M145) protein is Potassium-transporting ATPase potassium-binding subunit.